Here is a 482-residue protein sequence, read N- to C-terminus: Alanine aminotransferase 2 (482 aa).

Residue K299 is modified to N6-(pyridoxal phosphate)lysine.

It belongs to the class-I pyridoxal-phosphate-dependent aminotransferase family. Alanine aminotransferase subfamily. In terms of assembly, homodimer. Pyridoxal 5'-phosphate is required as a cofactor.

It carries out the reaction L-alanine + 2-oxoglutarate = pyruvate + L-glutamate. Its pathway is photosynthesis; C4 acid pathway. It functions in the pathway amino-acid degradation; L-alanine degradation via transaminase pathway; pyruvate from L-alanine: step 1/1. Its function is as follows. Transfer of C3 units between the cytosol of mesophyll and bundle sheath cells to maintain a nitrogen-carbon balance in the C4-dicarboxylic pathway. The polypeptide is Alanine aminotransferase 2 (Hordeum vulgare (Barley)).